We begin with the raw amino-acid sequence, 257 residues long: Cytochrome c oxidase subunit 3 (257 aa).

Helical transmembrane passes span 13 to 33, 36 to 56, 80 to 100, 154 to 174, 195 to 215, and 237 to 257; these read PWPITSSISALSLTLGFVSYF, LSMYLILLAVLMITISSFQWW, GMILFILSEVFFFVSFFWAFF, YISALNSLLITILLGVAFTMF, FFMTTGFHGLHVLIGSIFLLV, and AWYWHFVDVVWLFLFTFMYWW.

It belongs to the cytochrome c oxidase subunit 3 family. In terms of assembly, component of the cytochrome c oxidase (complex IV, CIV), a multisubunit enzyme composed of a catalytic core of 3 subunits and several supernumerary subunits. The complex exists as a monomer or a dimer and forms supercomplexes (SCs) in the inner mitochondrial membrane with ubiquinol-cytochrome c oxidoreductase (cytochrome b-c1 complex, complex III, CIII).

Its subcellular location is the mitochondrion inner membrane. The catalysed reaction is 4 Fe(II)-[cytochrome c] + O2 + 8 H(+)(in) = 4 Fe(III)-[cytochrome c] + 2 H2O + 4 H(+)(out). Component of the cytochrome c oxidase, the last enzyme in the mitochondrial electron transport chain which drives oxidative phosphorylation. The respiratory chain contains 3 multisubunit complexes succinate dehydrogenase (complex II, CII), ubiquinol-cytochrome c oxidoreductase (cytochrome b-c1 complex, complex III, CIII) and cytochrome c oxidase (complex IV, CIV), that cooperate to transfer electrons derived from NADH and succinate to molecular oxygen, creating an electrochemical gradient over the inner membrane that drives transmembrane transport and the ATP synthase. Cytochrome c oxidase is the component of the respiratory chain that catalyzes the reduction of oxygen to water. Electrons originating from reduced cytochrome c in the intermembrane space (IMS) are transferred via the dinuclear copper A center (CU(A)) of subunit 2 and heme A of subunit 1 to the active site in subunit 1, a binuclear center (BNC) formed by heme A3 and copper B (CU(B)). The BNC reduces molecular oxygen to 2 water molecules using 4 electrons from cytochrome c in the IMS and 4 protons from the mitochondrial matrix. The chain is Cytochrome c oxidase subunit 3 (COIII) from Rhipicephalus sanguineus (Brown dog tick).